We begin with the raw amino-acid sequence, 400 residues long: Large envelope protein (400 aa).

Residue methionine 1 is modified to N-acetylmethionine. The N-myristoyl glycine; by host moiety is linked to residue glycine 2. A pre-S1 region spans residues 2–119 (GGRLPKPRKG…PPLRDSHPQA (118 aa)). Positions 2–174 (GGRLPKPRKG…SSRIGDPAPT (173 aa)) are pre-S. The Virion surface; in external conformation segment spans residues 2-181 (GGRLPKPRKG…APTMENITSG (180 aa)). Residues 2–253 (GGRLPKPRKG…PGYRWMCLRR (252 aa)) are Intravirion; in internal conformation-facing. The N-linked (GlcNAc...) asparagine glycan is linked to arginine 4. Residues 84 to 116 (TLTTVPAVPPPASTNRQSGRQPTPISPPLRDSH) form a disordered region. Over residues 96–106 (STNRQSGRQPT) the composition is skewed to polar residues. The pre-S2 stretch occupies residues 120–174 (MQWNSTKFHQTLQDPRVRGLYFPAGGSSSGTVNPAPNIASHISSISSRIGDPAPT). Residues 182 to 202 (FLGPLLVLQAGFFLLTRILTI) traverse the membrane as a helical segment. Residues 203-253 (PQSLDSWWTSLNFLGEAPVCLGQNSQSPTSNHSPTSCPPICPGYRWMCLRR) lie on the Intravirion; in external conformation side of the membrane. A helical membrane pass occupies residues 254–274 (FIIFLFILLLCLIFLLVLLDC). At 275–348 (QGMLPVCPLI…WASVRFSWLS (74 aa)) the chain is on the virion surface side. N-linked (GlcNAc...) asparagine; by host glycosylation occurs at asparagine 320. The chain crosses the membrane as a helical span at residues 349–369 (LLVPFVQWFVGLSPTVWLSVI). Topologically, residues 370–375 (WMMWYW) are intravirion. A helical membrane pass occupies residues 376 to 398 (GPSLYNILSPFIPLLPIFFCLWV). The Virion surface segment spans residues 399–400 (YI).

The protein belongs to the orthohepadnavirus major surface antigen family. In its internal form (Li-HBsAg), interacts with the capsid protein and with the isoform S. Interacts with host chaperone CANX. In terms of assembly, associates with host chaperone CANX through its pre-S2 N glycan; this association may be essential for isoform M proper secretion. As to quaternary structure, interacts with isoform L. Interacts with the antigens of satellite virus HDV (HDVAgs); this interaction is required for encapsidation of HDV genomic RNA. Isoform M is N-terminally acetylated by host at a ratio of 90%, and N-glycosylated by host at the pre-S2 region. In terms of processing, myristoylated.

Its subcellular location is the virion membrane. Its function is as follows. The large envelope protein exists in two topological conformations, one which is termed 'external' or Le-HBsAg and the other 'internal' or Li-HBsAg. In its external conformation the protein attaches the virus to cell receptors and thereby initiating infection. This interaction determines the species specificity and liver tropism. This attachment induces virion internalization predominantly through caveolin-mediated endocytosis. The large envelope protein also assures fusion between virion membrane and endosomal membrane. In its internal conformation the protein plays a role in virion morphogenesis and mediates the contact with the nucleocapsid like a matrix protein. Functionally, the middle envelope protein plays an important role in the budding of the virion. It is involved in the induction of budding in a nucleocapsid independent way. In this process the majority of envelope proteins bud to form subviral lipoprotein particles of 22 nm of diameter that do not contain a nucleocapsid. This is Large envelope protein from Hepatitis B virus genotype A3 (isolate Cameroon/CMR711/1994) (HBV-A).